The chain runs to 293 residues: Protease HtpX (293 aa).

The next 2 membrane-spanning stretches (helical) occupy residues 4 to 24 (IALF…VLSL) and 34 to 54 (GLMI…LLMS). A Zn(2+)-binding site is contributed by H139. E140 is an active-site residue. H143 is a binding site for Zn(2+). Helical transmembrane passes span 158-178 (VVNT…AGFM) and 193-213 (LIYF…ASII). E222 contacts Zn(2+).

It belongs to the peptidase M48B family. Requires Zn(2+) as cofactor.

The protein resides in the cell inner membrane. The polypeptide is Protease HtpX (Escherichia coli O127:H6 (strain E2348/69 / EPEC)).